The following is a 455-amino-acid chain: Chromosomal replication initiator protein DnaA (455 aa).

The segment at 1–74 is domain I, interacts with DnaA modulators; that stretch reads MFDIEKFWQH…IQSAYGYAGI (74 aa). The interval 74-117 is domain II; sequence IEILPVFQINENNDSPERIVTPEPRYAIQLQQEKRAHKQFTKNL. Residues 118–334 form a domain III, AAA+ region region; the sequence is KLNEKYTFDN…GALVKVQAYA (217 aa). The ATP site is built by G162, G164, K165, and T166. A domain IV, binds dsDNA region spans residues 335 to 455; it reads TIERADINVN…VFDLKQMIEH (121 aa).

It belongs to the DnaA family. As to quaternary structure, oligomerizes as a right-handed, spiral filament on DNA at oriC.

The protein resides in the cytoplasm. Its function is as follows. Plays an essential role in the initiation and regulation of chromosomal replication. ATP-DnaA binds to the origin of replication (oriC) to initiate formation of the DNA replication initiation complex once per cell cycle. Binds the DnaA box (a 9 base pair repeat at the origin) and separates the double-stranded (ds)DNA. Forms a right-handed helical filament on oriC DNA; dsDNA binds to the exterior of the filament while single-stranded (ss)DNA is stabiized in the filament's interior. The ATP-DnaA-oriC complex binds and stabilizes one strand of the AT-rich DNA unwinding element (DUE), permitting loading of DNA polymerase. After initiation quickly degrades to an ADP-DnaA complex that is not apt for DNA replication. Binds acidic phospholipids. The protein is Chromosomal replication initiator protein DnaA of Lactobacillus helveticus (strain DPC 4571).